The sequence spans 953 residues: Probable isoleucine--tRNA ligase, cytoplasmic (953 aa).

The short motif at 45–55 is the 'HIGH' region element; that stretch reads PFATGLPHYGH. Residues 634–638 carry the 'KMSKS' region motif; sequence KMSKR. ATP is bound at residue lysine 637.

The protein belongs to the class-I aminoacyl-tRNA synthetase family.

It localises to the cytoplasm. It carries out the reaction tRNA(Ile) + L-isoleucine + ATP = L-isoleucyl-tRNA(Ile) + AMP + diphosphate. The sequence is that of Probable isoleucine--tRNA ligase, cytoplasmic from Enterocytozoon bieneusi (strain H348) (Microsporidian parasite).